The sequence spans 209 residues: Large ribosomal subunit protein uL3 (209 aa).

A disordered region spans residues 126-165 (HNFGGGSRTHGQSDRLRAPGSVGGSSDPSRTFRGTRMAGR).

Belongs to the universal ribosomal protein uL3 family. In terms of assembly, part of the 50S ribosomal subunit. Forms a cluster with proteins L14 and L19.

Functionally, one of the primary rRNA binding proteins, it binds directly near the 3'-end of the 23S rRNA, where it nucleates assembly of the 50S subunit. The chain is Large ribosomal subunit protein uL3 from Chlorobium limicola (strain DSM 245 / NBRC 103803 / 6330).